A 355-amino-acid polypeptide reads, in one-letter code: MAEGIVFDADAVSKDIAEGIAAIQQASTMEELKAIKAKYAGANSAMTRASKAIGSLAKNEKKEAGKVMGKLRADFGRAYGTKEASVKAAQEAAELAAETVDMTLPIRRKPLGARHPLPKLMEDVEDFFVGMGWQISDGPEVETEWFDFDALNFGPDHPARQMQDTFYVKGNQSKDAAGFVGSNMVLRTQTSSDQVRGLISHGVPLYIACPGRVFRTDELDATHTPVFHQVEALAVDKNLTMADLKGVLDKLAVAMFGPEAKSRLRPSYFPFTEPSAELDLWFPDKKGGPGWIEWGGCGMVNPNVLRSAGIDPDIYTGFAFGVGVERTLLLRHDINDMHDLVEGDVRFSEQFVMGE.

E273 provides a ligand contact to Mg(2+).

This sequence belongs to the class-II aminoacyl-tRNA synthetase family. Phe-tRNA synthetase alpha subunit type 1 subfamily. As to quaternary structure, tetramer of two alpha and two beta subunits. Mg(2+) is required as a cofactor.

It localises to the cytoplasm. The catalysed reaction is tRNA(Phe) + L-phenylalanine + ATP = L-phenylalanyl-tRNA(Phe) + AMP + diphosphate + H(+). The chain is Phenylalanine--tRNA ligase alpha subunit from Bifidobacterium animalis subsp. lactis (strain AD011).